The chain runs to 360 residues: DNA polymerase IV (360 aa).

The UmuC domain occupies 9–191 (IMHLDIDAFY…LNINKIPYIG (183 aa)). 2 residues coordinate Mg(2+): D13 and D108. E109 is a catalytic residue.

It belongs to the DNA polymerase type-Y family. In terms of assembly, monomer. It depends on Mg(2+) as a cofactor.

It is found in the cytoplasm. It carries out the reaction DNA(n) + a 2'-deoxyribonucleoside 5'-triphosphate = DNA(n+1) + diphosphate. Poorly processive, error-prone DNA polymerase involved in untargeted mutagenesis. Copies undamaged DNA at stalled replication forks, which arise in vivo from mismatched or misaligned primer ends. These misaligned primers can be extended by PolIV. Exhibits no 3'-5' exonuclease (proofreading) activity. May be involved in translesional synthesis, in conjunction with the beta clamp from PolIII. The polypeptide is DNA polymerase IV (Ureaplasma parvum serovar 3 (strain ATCC 27815 / 27 / NCTC 11736)).